Reading from the N-terminus, the 806-residue chain is Leucine--tRNA ligase (806 aa).

A 'HIGH' region motif is present at residues 38 to 48; that stretch reads PYPSGEIHMGH. Positions 572-576 match the 'KMSKS' region motif; that stretch reads KMSKS. ATP is bound at residue K575.

It belongs to the class-I aminoacyl-tRNA synthetase family.

The protein resides in the cytoplasm. The enzyme catalyses tRNA(Leu) + L-leucine + ATP = L-leucyl-tRNA(Leu) + AMP + diphosphate. The sequence is that of Leucine--tRNA ligase from Helicobacter pylori (strain ATCC 700392 / 26695) (Campylobacter pylori).